Reading from the N-terminus, the 382-residue chain is MVSTSIPEVKALRSSVSDYGNYDIIVRHYNYTGKLNIGAEKDHGIKLTSVVFILICCFIILENIFVLLTIWKTKKFHRPMYYFIGNLALSDLLAGVAYTANLLLSGATTYKLTPAQWFLREGSMFVALSASVFSLLAIAIERYITMLKMKLHNGSNSSRSFLLISACWVISLILGGLPIMGWNCISSLSSCSTVLPLYHKHYILFCTTVFTLLLLSIVILYCRIYSLVRTRSRRLTFRKNISKASRSSEKSLALLKTVIIVLSVFIACWAPLFILLLLDVGCKAKTCDILYKAEYFLVLAVLNSGTNPIIYTLTNKEMRRAFIRIVSCCKCPNGDSAGKFKRPIIPGMEFSRSKSDNSSHPQKDDGDNPETIMSSGNVNSSS.

The residue at position 2 (valine 2) is an N-acetylvaline. The Extracellular portion of the chain corresponds to 2–46 (VSTSIPEVKALRSSVSDYGNYDIIVRHYNYTGKLNIGAEKDHGIK). An N6-acetyllysine modification is found at lysine 10. An N-linked (GlcNAc...) asparagine glycan is attached at asparagine 30. A helical membrane pass occupies residues 47–68 (LTSVVFILICCFIILENIFVLL). The Cytoplasmic segment spans residues 69-82 (TIWKTKKFHRPMYY). The chain crosses the membrane as a helical span at residues 83 to 104 (FIGNLALSDLLAGVAYTANLLL). Over 105–116 (SGATTYKLTPAQ) the chain is Extracellular. Residues 117 to 138 (WFLREGSMFVALSASVFSLLAI) form a helical membrane-spanning segment. 120–121 (RE) contributes to the sphing-4-enine 1-phosphate binding site. Over 139 to 160 (AIERYITMLKMKLHNGSNSSRS) the chain is Cytoplasmic. The helical transmembrane segment at 161–182 (FLLISACWVISLILGGLPIMGW) threads the bilayer. Topologically, residues 183-196 (NCISSLSSCSTVLP) are extracellular. Residues cysteine 184 and cysteine 191 are joined by a disulfide bond. The chain crosses the membrane as a helical span at residues 197 to 224 (LYHKHYILFCTTVFTLLLLSIVILYCRI). The Cytoplasmic portion of the chain corresponds to 225 to 257 (YSLVRTRSRRLTFRKNISKASRSSEKSLALLKT). At threonine 236 the chain carries Phosphothreonine. A helical membrane pass occupies residues 258 to 278 (VIIVLSVFIACWAPLFILLLL). 265–269 (FIACW) serves as a coordination point for sphing-4-enine 1-phosphate. Topologically, residues 279–289 (DVGCKAKTCDI) are extracellular. A disulfide bridge links cysteine 282 with cysteine 287. The helical transmembrane segment at 290-310 (LYKAEYFLVLAVLNSGTNPII) threads the bilayer. Over 311-382 (YTLTNKEMRR…MSSGNVNSSS (72 aa)) the chain is Cytoplasmic. Cysteine 328 is lipidated: S-palmitoyl cysteine. Residues 348-382 (MEFSRSKSDNSSHPQKDDGDNPETIMSSGNVNSSS) are disordered. Phosphoserine occurs at positions 351 and 353. The segment covering 351–366 (SRSKSDNSSHPQKDDG) has biased composition (basic and acidic residues). Residues 371 to 382 (TIMSSGNVNSSS) show a composition bias toward polar residues.

Belongs to the G-protein coupled receptor 1 family. As to quaternary structure, interacts with GNAI1 and GNAI3. Interacts with CD69; this interaction promotes S1PR1 degradation. Palmitoylated by ZDHHC5. Palmitoylation is required for targeting to plasma membrane, enabling G(i) coupling. As to expression, expressed in a wide variety of tissues with highest levels in brain, heart and spleen. Lower levels found in kidney, liver, lung, muscle, placenta, thymus, and uterus. Very low levels in intestine, stomach and testis. According to PubMed:9931453, expressed modestly in apparent endothelial cells surrounding some blood vessels (e.g. aortic trunk).

The protein resides in the cell membrane. It is found in the endosome. It localises to the membrane raft. Functionally, G-protein coupled receptor for the bioactive lysosphingolipid sphingosine 1-phosphate (S1P) that seems to be coupled to the G(i) subclass of heteromeric G proteins. Signaling leads to the activation of RAC1, SRC, PTK2/FAK1 and MAP kinases. Plays an important role in cell migration, probably via its role in the reorganization of the actin cytoskeleton and the formation of lamellipodia in response to stimuli that increase the activity of the sphingosine kinase SPHK1. Required for normal chemotaxis toward sphingosine 1-phosphate. Required for normal embryonic heart development and normal cardiac morphogenesis. Plays an important role in the regulation of sprouting angiogenesis and vascular maturation. Inhibits sprouting angiogenesis to prevent excessive sprouting during blood vessel development. Required for normal egress of mature T-cells from the thymus into the blood stream and into peripheral lymphoid organs. Plays a role in the migration of osteoclast precursor cells, the regulation of bone mineralization and bone homeostasis. Plays a role in responses to oxidized 1-palmitoyl-2-arachidonoyl-sn-glycero-3-phosphocholine by pulmonary endothelial cells and in the protection against ventilator-induced lung injury. In Mus musculus (Mouse), this protein is Sphingosine 1-phosphate receptor 1.